Consider the following 62-residue polypeptide: uncharacterized protein (62 aa).

It is found in the plastid. It localises to the chloroplast. This is an uncharacterized protein from Chlamydomonas reinhardtii (Chlamydomonas smithii).